A 395-amino-acid polypeptide reads, in one-letter code: Xylose isomerase (395 aa).

Active-site residues include His54 and Asp57. The Mg(2+) site is built by Glu181, Glu217, His220, Asp245, Asp255, Asp257, and Asp293.

This sequence belongs to the xylose isomerase family. In terms of assembly, homotetramer. Requires Mg(2+) as cofactor.

The protein localises to the cytoplasm. It catalyses the reaction alpha-D-xylose = alpha-D-xylulofuranose. This Arthrobacter sp. (strain NRRL B3728) protein is Xylose isomerase (xylA).